The sequence spans 236 residues: ATP synthase subunit a (236 aa).

5 helical membrane-spanning segments follow: residues 18–38 (SNLL…VLCT), 80–100 (VTLL…AIVI), 112–132 (DPAI…YYGI), 179–199 (ILLS…IGAA), and 200–220 (IPML…AFIF).

This sequence belongs to the ATPase A chain family. In terms of assembly, F-type ATPases have 2 components, CF(1) - the catalytic core - and CF(0) - the membrane proton channel. CF(1) has five subunits: alpha(3), beta(3), gamma(1), delta(1), epsilon(1). CF(0) has three main subunits: a(1), b(2) and c(9-12). The alpha and beta chains form an alternating ring which encloses part of the gamma chain. CF(1) is attached to CF(0) by a central stalk formed by the gamma and epsilon chains, while a peripheral stalk is formed by the delta and b chains.

It is found in the cell membrane. Its function is as follows. Key component of the proton channel; it plays a direct role in the translocation of protons across the membrane. In Priestia megaterium (strain ATCC 12872 / QMB1551) (Bacillus megaterium), this protein is ATP synthase subunit a.